The following is a 486-amino-acid chain: Acetyl-coenzyme A carboxylase carboxyl transferase subunit beta, chloroplastic (486 aa).

The 263-residue stretch at 224–486 folds into the CoA carboxyltransferase N-terminal domain; that stretch reads LWVQCENCYG…FQFHGFFPRP (263 aa). Zn(2+) is bound by residues cysteine 228, cysteine 231, cysteine 247, and cysteine 250. The C4-type zinc-finger motif lies at 228 to 250; sequence CENCYGLNYKKFFSSKMNICEQC.

This sequence belongs to the AccD/PCCB family. Acetyl-CoA carboxylase is a heterohexamer composed of biotin carboxyl carrier protein, biotin carboxylase and 2 subunits each of ACCase subunit alpha and ACCase plastid-coded subunit beta (accD). Requires Zn(2+) as cofactor.

It is found in the plastid. The protein localises to the chloroplast stroma. It carries out the reaction N(6)-carboxybiotinyl-L-lysyl-[protein] + acetyl-CoA = N(6)-biotinyl-L-lysyl-[protein] + malonyl-CoA. It participates in lipid metabolism; malonyl-CoA biosynthesis; malonyl-CoA from acetyl-CoA: step 1/1. Component of the acetyl coenzyme A carboxylase (ACC) complex. Biotin carboxylase (BC) catalyzes the carboxylation of biotin on its carrier protein (BCCP) and then the CO(2) group is transferred by the transcarboxylase to acetyl-CoA to form malonyl-CoA. The polypeptide is Acetyl-coenzyme A carboxylase carboxyl transferase subunit beta, chloroplastic (Nymphaea alba (White water-lily)).